The sequence spans 567 residues: Laccase-7 (567 aa).

Positions 1-23 (MEGVRVPIACALILLAISSITSA) are cleaved as a signal peptide. Plastocyanin-like domains are found at residues 31–147 (NVQN…PKSG) and 157–310 (KEVP…YGGA). N-linked (GlcNAc...) asparagine glycans are attached at residues Asn-34, Asn-50, and Asn-77. Cu cation contacts are provided by His-81 and His-83. N-linked (GlcNAc...) asparagine glycosylation occurs at Asn-115. Residues His-126 and His-128 each coordinate Cu cation. N-linked (GlcNAc...) asparagine glycans are attached at residues Asn-186, Asn-298, Asn-339, Asn-374, Asn-386, Asn-427, and Asn-450. The Plastocyanin-like 3 domain maps to 412–551 (DFPDQPPVKF…GMIFVVKNGP (140 aa)). The Cu cation site is built by His-468, His-471, His-473, His-530, Cys-531, His-532, and His-536.

It belongs to the multicopper oxidase family. The cofactor is Cu cation. Predominantly expressed in tissues other than the inflorescence stem.

It localises to the secreted. The protein resides in the extracellular space. It is found in the apoplast. The catalysed reaction is 4 hydroquinone + O2 = 4 benzosemiquinone + 2 H2O. Its function is as follows. Lignin degradation and detoxification of lignin-derived products. This chain is Laccase-7 (LAC7), found in Arabidopsis thaliana (Mouse-ear cress).